We begin with the raw amino-acid sequence, 289 residues long: ATP synthase gamma chain (289 aa).

Belongs to the ATPase gamma chain family. In terms of assembly, F-type ATPases have 2 components, CF(1) - the catalytic core - and CF(0) - the membrane proton channel. CF(1) has five subunits: alpha(3), beta(3), gamma(1), delta(1), epsilon(1). CF(0) has three main subunits: a, b and c.

The protein resides in the cell inner membrane. Its function is as follows. Produces ATP from ADP in the presence of a proton gradient across the membrane. The gamma chain is believed to be important in regulating ATPase activity and the flow of protons through the CF(0) complex. The chain is ATP synthase gamma chain from Mannheimia succiniciproducens (strain KCTC 0769BP / MBEL55E).